The chain runs to 754 residues: Bifunctional sesterterpene synthase astC (754 aa).

The signal sequence occupies residues 1 to 24 (MASLEVFVLYLRIFFISFMSRARS). The segment at 58–388 (IQYRHSKLVD…RYHFHKPEHW (331 aa)) is sesterterpene synthase. Positions 149 and 153 each coordinate Mg(2+). The segment at 389 to 753 (RQVENVDDDG…LRLLLKRLHV (365 aa)) is geranylfarnesyl diphosphate synthase. Residues 392–403 (ENVDDDGNKSDD) are compositionally biased toward basic and acidic residues. Positions 392 to 414 (ENVDDDGNKSDDSGIAMKDSPES) are disordered. Mg(2+) is bound by residues aspartate 512 and aspartate 516.

This sequence in the N-terminal section; belongs to the terpene synthase family. The protein in the C-terminal section; belongs to the FPP/GGPP synthase family. Mg(2+) serves as cofactor.

It catalyses the reaction (2E,6E,10E,14E)-geranylfarnesyl diphosphate = preasperterpenoid A + diphosphate. It functions in the pathway secondary metabolite biosynthesis; terpenoid biosynthesis. Bifunctional sesterterpene synthase; part of the gene cluster that mediates the biosynthesis of the asperterpenoids, sesterterpenes that exhibit anti-tuberculosis activity. The first step of the pathway is performed by the sesterterpene synthase astC that possesses both prenyl transferase and terpene cyclase activity, converting isopentenyl diphosphate and dimethylallyl diphosphate into geranylfarnesyl diphosphate (GFPP) and further converting GFPP into preasperterpenoid A, respectively. The cytochrome P450 monooxygenase astB then dually oxidizes preasperterpenoid A to produce asperterpenoid A along with a minor product, asperterpenoid B. Finally, the cytochrome P450 monooxygenase astA converts asperterpenoid A into asperterpenoid C. The sequence is that of Bifunctional sesterterpene synthase astC from Talaromyces wortmannii (Penicillium wortmannii).